A 185-amino-acid chain; its full sequence is Peptidyl-tRNA hydrolase (185 aa).

Y14 serves as a coordination point for tRNA. The Proton acceptor role is filled by H19. Residues Y65, N67, and N113 each contribute to the tRNA site.

The protein belongs to the PTH family. As to quaternary structure, monomer.

It localises to the cytoplasm. It catalyses the reaction an N-acyl-L-alpha-aminoacyl-tRNA + H2O = an N-acyl-L-amino acid + a tRNA + H(+). Its function is as follows. Hydrolyzes ribosome-free peptidyl-tRNAs (with 1 or more amino acids incorporated), which drop off the ribosome during protein synthesis, or as a result of ribosome stalling. Catalyzes the release of premature peptidyl moieties from peptidyl-tRNA molecules trapped in stalled 50S ribosomal subunits, and thus maintains levels of free tRNAs and 50S ribosomes. This is Peptidyl-tRNA hydrolase from Rickettsia rickettsii (strain Iowa).